A 476-amino-acid chain; its full sequence is 23S rRNA (uracil(1939)-C(5))-methyltransferase RlmD (476 aa).

The TRAM domain occupies 1–55; the sequence is MVDEVLKIESLDLEARGIARRDGKVVFVEGALPGERVYAATVRRKPSYEIARVET. The [4Fe-4S] cluster site is built by cysteine 68, cysteine 74, cysteine 77, and cysteine 156. S-adenosyl-L-methionine contacts are provided by glutamine 265, phenylalanine 294, asparagine 299, glutamate 315, asparagine 343, and aspartate 364. Residue cysteine 394 is the Nucleophile of the active site.

It belongs to the class I-like SAM-binding methyltransferase superfamily. RNA M5U methyltransferase family. RlmD subfamily.

The catalysed reaction is uridine(1939) in 23S rRNA + S-adenosyl-L-methionine = 5-methyluridine(1939) in 23S rRNA + S-adenosyl-L-homocysteine + H(+). Functionally, catalyzes the formation of 5-methyl-uridine at position 1939 (m5U1939) in 23S rRNA. The sequence is that of 23S rRNA (uracil(1939)-C(5))-methyltransferase RlmD from Bordetella avium (strain 197N).